A 298-amino-acid chain; its full sequence is Isochorismatase domain-containing protein 1 (298 aa).

The residue at position 160 (tyrosine 160) is a Phosphotyrosine. Lysine 279 bears the N6-succinyllysine mark.

This sequence belongs to the isochorismatase family.

In Bos taurus (Bovine), this protein is Isochorismatase domain-containing protein 1 (ISOC1).